The sequence spans 112 residues: Large ribosomal subunit protein eL30x (112 aa).

Belongs to the eukaryotic ribosomal protein eL30 family.

In Arabidopsis thaliana (Mouse-ear cress), this protein is Large ribosomal subunit protein eL30x (RPL30C).